Consider the following 125-residue polypeptide: Small ribosomal subunit protein eS8 (125 aa).

The protein belongs to the eukaryotic ribosomal protein eS8 family. As to quaternary structure, part of the 30S ribosomal subunit.

The protein is Small ribosomal subunit protein eS8 of Methanosarcina mazei (strain ATCC BAA-159 / DSM 3647 / Goe1 / Go1 / JCM 11833 / OCM 88) (Methanosarcina frisia).